Reading from the N-terminus, the 300-residue chain is tRNA-cytidine(32) 2-sulfurtransferase (300 aa).

The PP-loop motif signature appears at S41–S46. [4Fe-4S] cluster-binding residues include C116, C119, and C207.

It belongs to the TtcA family. In terms of assembly, homodimer. Requires Mg(2+) as cofactor. [4Fe-4S] cluster serves as cofactor.

Its subcellular location is the cytoplasm. It catalyses the reaction cytidine(32) in tRNA + S-sulfanyl-L-cysteinyl-[cysteine desulfurase] + AH2 + ATP = 2-thiocytidine(32) in tRNA + L-cysteinyl-[cysteine desulfurase] + A + AMP + diphosphate + H(+). Its pathway is tRNA modification. Catalyzes the ATP-dependent 2-thiolation of cytidine in position 32 of tRNA, to form 2-thiocytidine (s(2)C32). The sulfur atoms are provided by the cysteine/cysteine desulfurase (IscS) system. The polypeptide is tRNA-cytidine(32) 2-sulfurtransferase (Idiomarina loihiensis (strain ATCC BAA-735 / DSM 15497 / L2-TR)).